Consider the following 138-residue polypeptide: Transcription antitermination protein NusB (138 aa).

The protein belongs to the NusB family.

Its function is as follows. Involved in transcription antitermination. Required for transcription of ribosomal RNA (rRNA) genes. Binds specifically to the boxA antiterminator sequence of the ribosomal RNA (rrn) operons. In Limosilactobacillus reuteri (strain DSM 20016) (Lactobacillus reuteri), this protein is Transcription antitermination protein NusB.